The primary structure comprises 229 residues: Enolase-phosphatase E1 (229 aa).

The protein belongs to the HAD-like hydrolase superfamily. MasA/MtnC family. As to quaternary structure, monomer. Mg(2+) serves as cofactor.

The enzyme catalyses 5-methylsulfanyl-2,3-dioxopentyl phosphate + H2O = 1,2-dihydroxy-5-(methylsulfanyl)pent-1-en-3-one + phosphate. The protein operates within amino-acid biosynthesis; L-methionine biosynthesis via salvage pathway; L-methionine from S-methyl-5-thio-alpha-D-ribose 1-phosphate: step 3/6. It functions in the pathway amino-acid biosynthesis; L-methionine biosynthesis via salvage pathway; L-methionine from S-methyl-5-thio-alpha-D-ribose 1-phosphate: step 4/6. Its function is as follows. Bifunctional enzyme that catalyzes the enolization of 2,3-diketo-5-methylthiopentyl-1-phosphate (DK-MTP-1-P) into the intermediate 2-hydroxy-3-keto-5-methylthiopentenyl-1-phosphate (HK-MTPenyl-1-P), which is then dephosphorylated to form the acireductone 1,2-dihydroxy-3-keto-5-methylthiopentene (DHK-MTPene). This Pectobacterium carotovorum subsp. carotovorum (strain PC1) protein is Enolase-phosphatase E1.